Consider the following 237-residue polypeptide: Class B acid phosphatase (237 aa).

Positions 1–23 (MKKITLALSAVCLLFTLNHSANA) are cleaved as a signal peptide. Aspartate 69 acts as the Nucleophile in catalysis. Positions 69 and 71 each coordinate Mg(2+). The Proton donor role is filled by aspartate 71. Substrate-binding positions include 137–138 (TG) and lysine 177. Aspartate 192 is a binding site for Mg(2+).

Belongs to the class B bacterial acid phosphatase family. Homotetramer. The cofactor is Mg(2+).

The protein resides in the periplasm. It carries out the reaction a phosphate monoester + H2O = an alcohol + phosphate. In terms of biological role, dephosphorylates several organic phosphate monoesters including monophosphate nucleotides (NMPs), coenzyme A (CoA), nicotinamide adenine dinucleotide phosphate (NADP), flavin mononucleotide (FMN) and phosphorylated 5-6 carbon sugars in vitro. Also has a phosphotransferase activity catalyzing the transfer of low-energy phosphate groups from organic phosphate monoesters to free hydroxyl groups of various organic compounds. The sequence is that of Class B acid phosphatase (aphA) from Salmonella typhi.